A 67-amino-acid chain; its full sequence is Large ribosomal subunit protein bL35 (67 aa).

The protein belongs to the bacterial ribosomal protein bL35 family.

This Paramagnetospirillum magneticum (strain ATCC 700264 / AMB-1) (Magnetospirillum magneticum) protein is Large ribosomal subunit protein bL35.